Consider the following 115-residue polypeptide: U3-lycotoxin-Ls1n (115 aa).

A signal peptide spans 1–20 (MKFVLLFGVLLVTLFSYSSA). Positions 21–44 (EMLDDFDQADEDELLSLIEKEEAR) are excised as a propeptide. 4 disulfide bridges follow: C48-C63, C55-C72, C62-C87, and C74-C85.

Belongs to the neurotoxin 19 (CSTX) family. 01 subfamily. In terms of tissue distribution, expressed by the venom gland.

The protein resides in the secreted. This chain is U3-lycotoxin-Ls1n, found in Lycosa singoriensis (Wolf spider).